The following is a 279-amino-acid chain: Energy-coupling factor transporter ATP-binding protein EcfA1 (279 aa).

Positions 5-240 (IELKKVTFNY…GDELLQLGLD (236 aa)) constitute an ABC transporter domain. 40–47 (GHNGSGKS) is a binding site for ATP.

Belongs to the ABC transporter superfamily. Energy-coupling factor EcfA family. In terms of assembly, forms a stable energy-coupling factor (ECF) transporter complex composed of 2 membrane-embedded substrate-binding proteins (S component), 2 ATP-binding proteins (A component) and 2 transmembrane proteins (T component).

It is found in the cell membrane. Functionally, ATP-binding (A) component of a common energy-coupling factor (ECF) ABC-transporter complex. Unlike classic ABC transporters this ECF transporter provides the energy necessary to transport a number of different substrates. This chain is Energy-coupling factor transporter ATP-binding protein EcfA1, found in Streptococcus pyogenes serotype M28 (strain MGAS6180).